Here is a 258-residue protein sequence, read N- to C-terminus: L-2,3-butanediol dehydrogenase (258 aa).

Residues 12 to 14 (QGI), Asp33, Gln37, 61 to 62 (DV), Asn88, Tyr154, Lys158, and 184 to 189 (PGIVGT) contribute to the NAD(+) site. The active-site Proton acceptor is the Tyr154.

This sequence belongs to the short-chain dehydrogenases/reductases (SDR) family. In terms of assembly, homotetramer.

It carries out the reaction (S,S)-butane-2,3-diol + NAD(+) = (S)-acetoin + NADH + H(+). The enzyme catalyses (S)-acetoin + NAD(+) = diacetyl + NADH + H(+). Its activity is regulated as follows. Slightly activated by Ba(2+), Ca(2+), Mn(2+), Mg(2+), and Co(2+), while Hg(2+) and Cu(2+) cause marked inhibition of the activity. Ni(2+), Zn(2+) and Cd(2+) have no effect on the catalytic activity. Is also slightly inhibited by lactate, pyruvate, succinate, acetate and formate. In terms of biological role, catalyzes the reversible reduction of (S)-acetoin to (S,S)-butane-2,3-diol (L-BD) in the presence of NADH. To a lesser extent, can also catalyze the irreversible reduction of diacetyl to (S)-acetoin. Cannot oxidize meso-BD, D-BD, 2-butanol, 1,2-propanediol, ethanol, acetol, 1,2-butanediol, 1,3-butanediol, n-butanol, and n-propanol. Cannot reduce (R)-acetoin, acetol, dihydroxyacetone and 2,4-pentanedione. This chain is L-2,3-butanediol dehydrogenase, found in Corynebacterium glutamicum (Brevibacterium saccharolyticum).